The following is a 972-amino-acid chain: Isoleucine--tRNA ligase (972 aa).

Positions 63-73 (PYANGNIHIGH) match the 'HIGH' region motif. Glu603 is a binding site for L-isoleucyl-5'-AMP. The short motif at 644–648 (KMSKS) is the 'KMSKS' region element. ATP is bound at residue Lys647.

It belongs to the class-I aminoacyl-tRNA synthetase family. IleS type 1 subfamily. As to quaternary structure, monomer.

Its subcellular location is the cytoplasm. It carries out the reaction tRNA(Ile) + L-isoleucine + ATP = L-isoleucyl-tRNA(Ile) + AMP + diphosphate. Catalyzes the attachment of isoleucine to tRNA(Ile). As IleRS can inadvertently accommodate and process structurally similar amino acids such as valine, to avoid such errors it has two additional distinct tRNA(Ile)-dependent editing activities. One activity is designated as 'pretransfer' editing and involves the hydrolysis of activated Val-AMP. The other activity is designated 'posttransfer' editing and involves deacylation of mischarged Val-tRNA(Ile). The sequence is that of Isoleucine--tRNA ligase from Brucella abortus (strain 2308).